The sequence spans 158 residues: Eukaryotic translation initiation factor 5A (158 aa).

Lys51 is modified (hypusine).

It belongs to the eIF-5A family. Post-translationally, lys-51 undergoes hypusination, a unique post-translational modification that consists in the addition of a butylamino group from spermidine to lysine side chain, leading to the formation of the unusual amino acid hypusine. eIF-5As are the only known proteins to undergo this modification, which is essential for their function.

The protein localises to the cytoplasm. Its function is as follows. Translation factor that promotes translation elongation and termination, particularly upon ribosome stalling at specific amino acid sequence contexts. Binds between the exit (E) and peptidyl (P) site of the ribosome and promotes rescue of stalled ribosome: specifically required for efficient translation of polyproline-containing peptides as well as other motifs that stall the ribosome. Acts as a ribosome quality control (RQC) cofactor by joining the RQC complex to facilitate peptidyl transfer during CAT tailing step. This chain is Eukaryotic translation initiation factor 5A (ANB1), found in Candida albicans (strain SC5314 / ATCC MYA-2876) (Yeast).